The following is a 947-amino-acid chain: Ionotropic receptor 25a (947 aa).

Residues 1–30 form the signal peptide; it reads MILMNPKTSKILWLLGFLSLLSSFSLEIAA. Residues 31 to 562 are Extracellular-facing; sequence QTTQNINVLF…SLFKFLTVLE (532 aa). N-linked (GlcNAc...) asparagine glycans are attached at residues Asn78, Asn177, Asn277, and Asn434. The helical transmembrane segment at 563-583 threads the bilayer; sequence TNVWLCILAAYFFTSFLMWIF. At 584-641 the chain is on the cytoplasmic side; the sequence is DRWSPYSYQNNREKYKDDEEKREFNLKECLWFCMTSLTPQGGGEAPKNLSGRLVAATW. Residues 642–662 form a helical membrane-spanning segment; that stretch reads WLFGFIIIASYTANLAAFLTV. Residues 663–858 lie on the Extracellular side of the membrane; it reads SRLDTPVESL…DQSDGISIQN (196 aa). N-linked (GlcNAc...) asparagine glycans are attached at residues Asn687, Asn715, and Asn762. The chain crosses the membrane as a helical span at residues 859-879; sequence IGGVFIVIFVGIGMACITLVF. At 880–947 the chain is on the cytoplasmic side; that stretch reads EYWWYRYRKN…QYPATFKPRF (68 aa).

Belongs to the glutamate-gated ion channel (TC 1.A.10.1) family. Interacts with nocte. In terms of tissue distribution, in the antenna, detected in neurons of the arista and also detected in sacculus neurons which innervate the first and second chambers (at protein level). Throughout the main body of the antenna, expressed in neurons which innervate the coeloconic class of olfactory sensilla (at protein level). Expressed in multiple cells of the dorsal organ including the dorsal organ cool cells (at protein level). Detected in femur and retina. Expressed in a subset of femur chordonotal neurons and antennal Johnston's Organ neurons.

The protein resides in the cell membrane. The protein localises to the cell projection. Its subcellular location is the axon. It localises to the dendrite. It is found in the perikaryon. The protein resides in the cilium. Its function is as follows. Integral part of various neural sensory systems in the antenna that provide the neural basis for the response to environmental changes in temperature (thermosensation), humidity (hygrosensation) and odor detection. Required for odor-evoked electrophysiological responses in multiple neuron classes in the antenna and is likely to function as part of an olfactory receptor complex with Ir76a and Ir76b. Together with Ir21a and Ir93a, mediates the response of the larval dorsal organ cool cells, a trio of cool-responsive neurons, to cooling and is required for cool avoidance behavior. Required in chordonotal organ neurons for behavioral synchronization to low-amplitude temperature cycles and mediates circadian clock resetting by temperature. Together with Ir40a and Ir93a, mediates the response of the hydrosensory sacculus neurons to changes in relative humidity, and is required for dry detection and humidiy preference behavior. The chain is Ionotropic receptor 25a from Drosophila melanogaster (Fruit fly).